Here is a 341-residue protein sequence, read N- to C-terminus: Biotin synthase (341 aa).

A Radical SAM core domain is found at 56 to 285 (ADIQRAALLS…KARVRLSAGR (230 aa)). [4Fe-4S] cluster contacts are provided by Cys-71, Cys-75, and Cys-78. [2Fe-2S] cluster is bound by residues Cys-116, Cys-148, Cys-208, and Arg-280.

This sequence belongs to the radical SAM superfamily. Biotin synthase family. As to quaternary structure, homodimer. Requires [4Fe-4S] cluster as cofactor. [2Fe-2S] cluster serves as cofactor.

It catalyses the reaction (4R,5S)-dethiobiotin + (sulfur carrier)-SH + 2 reduced [2Fe-2S]-[ferredoxin] + 2 S-adenosyl-L-methionine = (sulfur carrier)-H + biotin + 2 5'-deoxyadenosine + 2 L-methionine + 2 oxidized [2Fe-2S]-[ferredoxin]. Its pathway is cofactor biosynthesis; biotin biosynthesis; biotin from 7,8-diaminononanoate: step 2/2. Catalyzes the conversion of dethiobiotin (DTB) to biotin by the insertion of a sulfur atom into dethiobiotin via a radical-based mechanism. In Methylorubrum populi (strain ATCC BAA-705 / NCIMB 13946 / BJ001) (Methylobacterium populi), this protein is Biotin synthase.